Here is a 511-residue protein sequence, read N- to C-terminus: Probable cytochrome P450 4ac2 (511 aa).

2 residues coordinate heme: glutamate 318 and cysteine 455.

The protein belongs to the cytochrome P450 family. It depends on heme as a cofactor.

The protein localises to the endoplasmic reticulum membrane. Its subcellular location is the microsome membrane. In terms of biological role, may be involved in the metabolism of insect hormones and in the breakdown of synthetic insecticides. This is Probable cytochrome P450 4ac2 (Cyp4ac2) from Drosophila melanogaster (Fruit fly).